The following is a 954-amino-acid chain: Glycine dehydrogenase (decarboxylating) (954 aa).

Lys704 carries the post-translational modification N6-(pyridoxal phosphate)lysine.

This sequence belongs to the GcvP family. In terms of assembly, the glycine cleavage system is composed of four proteins: P, T, L and H. Pyridoxal 5'-phosphate is required as a cofactor.

The catalysed reaction is N(6)-[(R)-lipoyl]-L-lysyl-[glycine-cleavage complex H protein] + glycine + H(+) = N(6)-[(R)-S(8)-aminomethyldihydrolipoyl]-L-lysyl-[glycine-cleavage complex H protein] + CO2. The glycine cleavage system catalyzes the degradation of glycine. The P protein binds the alpha-amino group of glycine through its pyridoxal phosphate cofactor; CO(2) is released and the remaining methylamine moiety is then transferred to the lipoamide cofactor of the H protein. This Rhizobium johnstonii (strain DSM 114642 / LMG 32736 / 3841) (Rhizobium leguminosarum bv. viciae) protein is Glycine dehydrogenase (decarboxylating).